The primary structure comprises 419 residues: uncharacterized protein (419 aa).

This is an uncharacterized protein from Connochaetes taurinus (Blue wildebeest).